The following is a 301-amino-acid chain: NAD kinase 2 (301 aa).

Asp77 acts as the Proton acceptor in catalysis. NAD(+) contacts are provided by residues 77-78, Arg82, 151-152, Lys162, Asp181, and 192-197; these read DG, NE, and TAYAFS.

Belongs to the NAD kinase family. A divalent metal cation is required as a cofactor.

The protein localises to the cytoplasm. It carries out the reaction NAD(+) + ATP = ADP + NADP(+) + H(+). Involved in the regulation of the intracellular balance of NAD and NADP, and is a key enzyme in the biosynthesis of NADP. Catalyzes specifically the phosphorylation on 2'-hydroxyl of the adenosine moiety of NAD to yield NADP. The polypeptide is NAD kinase 2 (Streptomyces coelicolor (strain ATCC BAA-471 / A3(2) / M145)).